The following is a 361-amino-acid chain: Chorismate synthase (361 aa).

2 residues coordinate NADP(+): R48 and R54. FMN contacts are provided by residues 131–133 (RSS), 243–244 (NA), G287, 302–306 (KPTSS), and R328.

Belongs to the chorismate synthase family. As to quaternary structure, homotetramer. FMNH2 is required as a cofactor.

The enzyme catalyses 5-O-(1-carboxyvinyl)-3-phosphoshikimate = chorismate + phosphate. Its pathway is metabolic intermediate biosynthesis; chorismate biosynthesis; chorismate from D-erythrose 4-phosphate and phosphoenolpyruvate: step 7/7. Functionally, catalyzes the anti-1,4-elimination of the C-3 phosphate and the C-6 proR hydrogen from 5-enolpyruvylshikimate-3-phosphate (EPSP) to yield chorismate, which is the branch point compound that serves as the starting substrate for the three terminal pathways of aromatic amino acid biosynthesis. This reaction introduces a second double bond into the aromatic ring system. The polypeptide is Chorismate synthase (Rhodopseudomonas palustris (strain BisB5)).